We begin with the raw amino-acid sequence, 147 residues long: MQPLSILVLHGPNLNLLGKREPGVYGSTTLAEINSLLAEAALKLQAKVFPLQSNHEGVLVDAIHEALGKHQGILINAGAYTHTSVALRDAIAAVNLPTVEVHLSNIYRREDFRHHSYIAPVVIGQISGFGVQSYLLGLQGLVAHLKG.

Tyrosine 25 serves as the catalytic Proton acceptor. Substrate contacts are provided by asparagine 76, histidine 82, and aspartate 89. Residue histidine 102 is the Proton donor of the active site. Residues 103–104 and arginine 113 each bind substrate; that span reads LS.

Belongs to the type-II 3-dehydroquinase family. Homododecamer.

It catalyses the reaction 3-dehydroquinate = 3-dehydroshikimate + H2O. The protein operates within metabolic intermediate biosynthesis; chorismate biosynthesis; chorismate from D-erythrose 4-phosphate and phosphoenolpyruvate: step 3/7. In terms of biological role, catalyzes a trans-dehydration via an enolate intermediate. In Nostoc sp. (strain PCC 7120 / SAG 25.82 / UTEX 2576), this protein is 3-dehydroquinate dehydratase.